Consider the following 306-residue polypeptide: D-alanine--D-alanine ligase (306 aa).

Positions 101-303 (KQVWQAVGLP…FSQLVVKILE (203 aa)) constitute an ATP-grasp domain. 134 to 189 (FTHLGLPLIVKPSREGSSVGMSKVNTLSELPAALEEAFRHDDDILVEKWLSGPEYT) contacts ATP. Residues D257, E270, and N272 each contribute to the Mg(2+) site.

It belongs to the D-alanine--D-alanine ligase family. Mg(2+) serves as cofactor. Mn(2+) is required as a cofactor.

The protein resides in the cytoplasm. It carries out the reaction 2 D-alanine + ATP = D-alanyl-D-alanine + ADP + phosphate + H(+). The protein operates within cell wall biogenesis; peptidoglycan biosynthesis. In terms of biological role, cell wall formation. The sequence is that of D-alanine--D-alanine ligase from Pectobacterium carotovorum subsp. carotovorum (strain PC1).